We begin with the raw amino-acid sequence, 498 residues long: ATP synthase subunit beta, chloroplastic (498 aa).

Position 6 is a phosphothreonine (Thr-6). A Phosphoserine modification is found at Ser-13. Residue 172–179 (GGAGVGKT) participates in ATP binding.

The protein belongs to the ATPase alpha/beta chains family. F-type ATPases have 2 components, CF(1) - the catalytic core - and CF(0) - the membrane proton channel. CF(1) has five subunits: alpha(3), beta(3), gamma(1), delta(1), epsilon(1). CF(0) has four main subunits: a(1), b(1), b'(1) and c(9-12).

The protein resides in the plastid. Its subcellular location is the chloroplast thylakoid membrane. The catalysed reaction is ATP + H2O + 4 H(+)(in) = ADP + phosphate + 5 H(+)(out). In terms of biological role, produces ATP from ADP in the presence of a proton gradient across the membrane. The catalytic sites are hosted primarily by the beta subunits. This Arabis hirsuta (Hairy rock-cress) protein is ATP synthase subunit beta, chloroplastic.